A 160-amino-acid chain; its full sequence is Protein TCP17 (160 aa).

The protein resides in the cytoplasm. The polypeptide is Protein TCP17 (Trypanosoma cruzi).